We begin with the raw amino-acid sequence, 657 residues long: 1-deoxy-D-xylulose-5-phosphate synthase (657 aa).

Thiamine diphosphate-binding positions include H73 and 113 to 115; that span reads SHA. A Mg(2+)-binding site is contributed by D145. Thiamine diphosphate-binding positions include 146–147, N175, Y293, and E375; that span reads GA. N175 serves as a coordination point for Mg(2+).

The protein belongs to the transketolase family. DXPS subfamily. Homodimer. Requires Mg(2+) as cofactor. Thiamine diphosphate serves as cofactor.

It carries out the reaction D-glyceraldehyde 3-phosphate + pyruvate + H(+) = 1-deoxy-D-xylulose 5-phosphate + CO2. The protein operates within metabolic intermediate biosynthesis; 1-deoxy-D-xylulose 5-phosphate biosynthesis; 1-deoxy-D-xylulose 5-phosphate from D-glyceraldehyde 3-phosphate and pyruvate: step 1/1. Its function is as follows. Catalyzes the acyloin condensation reaction between C atoms 2 and 3 of pyruvate and glyceraldehyde 3-phosphate to yield 1-deoxy-D-xylulose-5-phosphate (DXP). The chain is 1-deoxy-D-xylulose-5-phosphate synthase from Renibacterium salmoninarum (strain ATCC 33209 / DSM 20767 / JCM 11484 / NBRC 15589 / NCIMB 2235).